The primary structure comprises 477 residues: Methylenetetrahydrofolate--tRNA-(uracil-5-)-methyltransferase TrmFO (477 aa).

Glycine 15–glycine 20 serves as a coordination point for FAD.

Belongs to the MnmG family. TrmFO subfamily. It depends on FAD as a cofactor.

It localises to the cytoplasm. The catalysed reaction is uridine(54) in tRNA + (6R)-5,10-methylene-5,6,7,8-tetrahydrofolate + NADH + H(+) = 5-methyluridine(54) in tRNA + (6S)-5,6,7,8-tetrahydrofolate + NAD(+). The enzyme catalyses uridine(54) in tRNA + (6R)-5,10-methylene-5,6,7,8-tetrahydrofolate + NADPH + H(+) = 5-methyluridine(54) in tRNA + (6S)-5,6,7,8-tetrahydrofolate + NADP(+). In terms of biological role, catalyzes the folate-dependent formation of 5-methyl-uridine at position 54 (M-5-U54) in all tRNAs. The protein is Methylenetetrahydrofolate--tRNA-(uracil-5-)-methyltransferase TrmFO of Nitrobacter winogradskyi (strain ATCC 25391 / DSM 10237 / CIP 104748 / NCIMB 11846 / Nb-255).